A 1254-amino-acid polypeptide reads, in one-letter code: Structural polyprotein (1254 aa).

The interval 1–33 is necessary for nucleocapsid assembly and virus assembly; the sequence is MFPFQPMYPMQPMPYRNPFAAPRRPWFPRTDPF. Positions 33–68 are host transcription inhibition; that stretch reads FLAMQVQELTRSMANLTFKQRRDAPPEGPSAKKPKK. The short motif at 41-48 is the Supraphysiological nuclear export signal element; that stretch reads LTRSMANL. The disordered stretch occupies residues 45 to 119; it reads MANLTFKQRR…KKPGKRQRMV (75 aa). A Nuclear localization signal motif is present at residues 64-68; the sequence is KKPKK. A compositionally biased stretch (basic residues) spans 80 to 92; sequence GKKKKNQGKKKAK. Residues 91 to 127 form a binding to the viral RNA region; that stretch reads AKTGPPNPKAQNGNKKKTNKKPGKRQRMVMKLESDKT. 2 positions are modified to phosphothreonine: Thr-93 and Thr-108. The span at 104 to 118 shows a compositional bias: basic residues; it reads NKKKTNKKPGKRQRM. Residues 112–126 are ribosome-binding; the sequence is PGKRQRMVMKLESDK. Ser-124 carries the phosphoserine modification. The region spanning 126–275 is the Peptidase S3 domain; sequence KTFPIMLEGK…KYTPENCEQW (150 aa). Phosphothreonine is present on Thr-127. Residues His-152, Asp-174, and Ser-226 each act as charge relay system in the active site. The functions as an uncleaved signal peptide for the precursor of protein E3/E2 stretch occupies residues 276–287; the sequence is SLVTTMCLLANV. Residues 276-701 are Extracellular-facing; sequence SLVTTMCLLA…HYYHRYPMST (426 aa). N-linked (GlcNAc...) asparagine; by host glycosylation is found at Asn-286, Asn-546, and Asn-652. The chain crosses the membrane as a helical span at residues 702–722; that stretch reads ILGLSICAAIATVSVAASTWL. Topologically, residues 723–757 are cytoplasmic; the sequence is FCRSRVACLTPYRLTPNARIPFCLAVLCCARTARA. 3 S-palmitoyl cysteine; by host lipidation sites follow: Cys-730, Cys-750, and Cys-751. The Extracellular portion of the chain corresponds to 758–772; the sequence is ETTWESLDHLWNNNQ. Residues 773–793 form a helical membrane-spanning segment; sequence QMFWIQLLIPLAALIVVTRLL. Topologically, residues 794 to 795 are cytoplasmic; the sequence is RC. Residues 796 to 816 traverse the membrane as a helical segment; the sequence is VCCVVPFLVMAGAAAPAYEHA. Topologically, residues 817 to 1224 are extracellular; sequence TTMPSQAGIS…SKTAWTWLTS (408 aa). 4 disulfide bridges follow: Cys-861–Cys-926, Cys-874–Cys-906, Cys-875–Cys-908, and Cys-880–Cys-890. Positions 896–913 are E1 fusion peptide loop; the sequence is VYPFMWGGAYCFCDTENT. Residue Asn-946 is glycosylated (N-linked (GlcNAc...) asparagine; by host). 4 cysteine pairs are disulfide-bonded: Cys-1071–Cys-1083, Cys-1113–Cys-1188, Cys-1118–Cys-1192, and Cys-1140–Cys-1182. The helical transmembrane segment at 1225 to 1245 threads the bilayer; the sequence is LLGGSAVIIIIGLVLATIVAM. The Cytoplasmic portion of the chain corresponds to 1246–1254; that stretch reads YVLTNQKHN.

Homodimer. Homomultimer. Interacts with host karyopherin KPNA4; this interaction allows the nuclear import of the viral capsid protein. Interacts with spike glycoprotein E2. Interacts with host IRAK1; the interaction leads to inhibition of IRAK1-dependent signaling. Part of a tetrameric complex composed of host CRM1, host importin alpha/beta dimer and the viral capsid; this complex blocks the receptor-mediated transport through the nuclear pore. Interacts with host phosphatase PPP1CA; this interaction dephosphorylates the capsid protein, which increases its ability to bind to the viral genome. As to quaternary structure, the precursor of protein E3/E2 and E1 form a heterodimer shortly after synthesis. In terms of assembly, interacts with spike glycoprotein E2. The precursor of protein E3/E2 and E1 form a heterodimer shortly after synthesis. Processing of the precursor of protein E3/E2 into E2 and E3 results in a heterodimer of the spike glycoproteins E2 and E1. Spike at virion surface are constituted of three E2-E1 heterodimers. After target cell attachment and endocytosis, E1 change conformation to form homotrimers. Interacts with 6K protein. Interacts (via fusion peptide loop) with host LDLRAD3 (via domain LDL-receptor class A 1); this interaction mediates viral entry to the host cell. 2 adjacent E2-E1 heterodimers in the trimeric spike interact with host LDLRAD3. Interacts with spike glycoprotein E1. Processing of the precursor of protein E3/E2 into E2 and E3 results in a heterodimer of the spike glycoproteins E2 and E1. Spike at virion surface are constituted of a trimer of E2-E1 heterodimers. Interacts with 6K protein. Interacts with host LDLRAD3 (via domain LDL-receptor class A 1); this interaction mediates viral entry to the host cell. 2 adjacent E2-E1 heterodimers in the trimeric spike interact with host LDLRAD3. As to quaternary structure, oligomer. Interacts with spike glycoprotein E1. Interacts with spike glycoprotein E2. Structural polyprotein: Specific enzymatic cleavages in vivo yield mature proteins. Capsid protein is auto-cleaved during polyprotein translation, unmasking a signal peptide at the N-terminus of the precursor of E3/E2. The remaining polyprotein is then targeted to the host endoplasmic reticulum, where host signal peptidase cleaves it into pE2, 6K and E1 proteins. pE2 is further processed to mature E3 and E2 by host furin in trans-Golgi vesicle. Post-translationally, phosphorylated on serine and threonine residues. In terms of processing, palmitoylated via thioester bonds. These palmitoylations may induce disruption of the C-terminus transmembrane. This would result in the reorientation of E2 C-terminus from lumenal to cytoplasmic side. N-glycosylated. Post-translationally, palmitoylated via thioester bonds.

The protein resides in the virion. It is found in the host cytoplasm. Its subcellular location is the host cell membrane. It localises to the host nucleus. The protein localises to the virion membrane. It carries out the reaction Autocatalytic release of the core protein from the N-terminus of the togavirus structural polyprotein by hydrolysis of a -Trp-|-Ser- bond.. In terms of biological role, forms an icosahedral capsid with a T=4 symmetry composed of 240 copies of the capsid protein surrounded by a lipid membrane through which penetrate 80 spikes composed of trimers of E1-E2 heterodimers. The capsid protein binds to the viral RNA genome at a site adjacent to a ribosome binding site for viral genome translation following genome release. Possesses a protease activity that results in its autocatalytic cleavage from the nascent structural protein. Following its self-cleavage, the capsid protein transiently associates with ribosomes, and within several minutes the protein binds to viral RNA and rapidly assembles into icosahedric core particles. The resulting nucleocapsid eventually associates with the cytoplasmic domain of the spike glycoprotein E2 at the cell membrane, leading to budding and formation of mature virions. In case of infection, new virions attach to target cells and after clathrin-mediated endocytosis their membrane fuses with the host endosomal membrane. This leads to the release of the nucleocapsid into the cytoplasm, followed by an uncoating event necessary for the genomic RNA to become accessible. The uncoating might be triggered by the interaction of capsid proteins with ribosomes. Binding of ribosomes would release the genomic RNA since the same region is genomic RNA-binding and ribosome-binding. Specifically inhibits interleukin-1 receptor-associated kinase 1/IRAK1-dependent signaling during viral entry, representing a means by which the alphaviruses may evade innate immune detection and activation prior to viral gene expression. Inhibits host transcription. Forms a tetrameric complex with XPO1/CRM1 and the nuclear import receptor importin. This complex blocks the central channel of host nuclear pores thereby inhibiting the receptor-mediated nuclear transport and thus the host mRNA and rRNA transcription. The inhibition of transcription is linked to a cytopathic effect on the host cell. Functionally, provides the signal sequence for the translocation of the precursor of protein E3/E2 to the host endoplasmic reticulum. Furin-cleaved E3 remains associated with spike glycoprotein E1 and mediates pH protection of the latter during the transport via the secretory pathway. After virion release from the host cell, the assembly protein E3 is gradually released in the extracellular space. Its function is as follows. Plays a role in viral attachment to target host cell, by binding to the cell receptor LDLRAD3. Synthesized as a p62 precursor which is processed by furin at the cell membrane just before virion budding, giving rise to E2-E1 heterodimer. The p62-E1 heterodimer is stable, whereas E2-E1 is unstable and dissociate at low pH. p62 is processed at the last step, presumably to avoid E1 fusion activation before its final export to cell surface. E2 C-terminus contains a transitory transmembrane that would be disrupted by palmitoylation, resulting in reorientation of the C-terminal tail from lumenal to cytoplasmic side. This step is critical since E2 C-terminus is involved in budding by interacting with capsid proteins. This release of E2 C-terminus in cytoplasm occurs lately in protein export, and precludes premature assembly of particles at the endoplasmic reticulum membrane. Acts as a viroporin that participates in virus glycoprotein processing and transport to the plasma membrane, cell permeabilization and budding of viral particles. Disrupts the calcium homeostasis of the cell, probably at the endoplasmic reticulum level. This leads to cytoplasmic calcium elevation. Because of its lipophilic properties, the 6K protein is postulated to influence the selection of lipids that interact with the transmembrane domains of the glycoproteins, which, in turn, affects the deformability of the bilayer required for the extreme curvature that occurs as budding proceeds. Present in low amount in virions, about 3% compared to viral glycoproteins. In terms of biological role, class II viral fusion protein. Fusion activity is inactive as long as E1 is bound to E2 in mature virion. After virus attachment to cell receptor LDLRAD3 and endocytosis, acidification of the endosome induce dissociation of E1/E2 heterodimer and concomitant trimerization of the E1 subunits. This E1 trimer is fusion active, and promotes release of viral nucleocapsid in cytoplasm after endosome and viral membrane fusion. Efficient fusion requires the presence of cholesterol and sphingolipid in the target membrane. This is Structural polyprotein from Bos taurus (Bovine).